The following is a 217-amino-acid chain: UPF0502 protein PFLU_2135 (217 aa).

This sequence belongs to the UPF0502 family.

The protein is UPF0502 protein PFLU_2135 of Pseudomonas fluorescens (strain SBW25).